Here is a 158-residue protein sequence, read N- to C-terminus: NAD(P)H-quinone oxidoreductase subunit J, chloroplastic (158 aa).

Belongs to the complex I 30 kDa subunit family. In terms of assembly, NDH is composed of at least 16 different subunits, 5 of which are encoded in the nucleus.

It is found in the plastid. The protein resides in the chloroplast thylakoid membrane. The catalysed reaction is a plastoquinone + NADH + (n+1) H(+)(in) = a plastoquinol + NAD(+) + n H(+)(out). It carries out the reaction a plastoquinone + NADPH + (n+1) H(+)(in) = a plastoquinol + NADP(+) + n H(+)(out). Its function is as follows. NDH shuttles electrons from NAD(P)H:plastoquinone, via FMN and iron-sulfur (Fe-S) centers, to quinones in the photosynthetic chain and possibly in a chloroplast respiratory chain. The immediate electron acceptor for the enzyme in this species is believed to be plastoquinone. Couples the redox reaction to proton translocation, and thus conserves the redox energy in a proton gradient. The protein is NAD(P)H-quinone oxidoreductase subunit J, chloroplastic of Nasturtium officinale (Watercress).